The primary structure comprises 218 residues: Ras-related protein RABA5e (218 aa).

A GTP-binding site is contributed by 19 to 26 (GDSAVGKS). Residues 41-49 (SKATIGVEF) carry the Effector region motif. GTP-binding positions include 67–71 (DTAGQ), 125–128 (NKCD), and 155–156 (SA). 2 S-geranylgeranyl cysteine lipidation sites follow: cysteine 214 and cysteine 215. Residue cysteine 215 is modified to Cysteine methyl ester. A propeptide spans 216 to 218 (SST) (removed in mature form).

The protein belongs to the small GTPase superfamily. Rab family.

It is found in the cell membrane. Intracellular vesicle trafficking and protein transport. This is Ras-related protein RABA5e (RABA5E) from Arabidopsis thaliana (Mouse-ear cress).